Consider the following 444-residue polypeptide: Xylose isomerase (444 aa).

Active-site residues include His101 and Asp104. Positions 232, 268, 271, 296, 307, 309, and 339 each coordinate Mg(2+).

It belongs to the xylose isomerase family. As to quaternary structure, homotetramer. Mg(2+) is required as a cofactor.

Its subcellular location is the cytoplasm. It catalyses the reaction alpha-D-xylose = alpha-D-xylulofuranose. This Thermotoga petrophila (strain ATCC BAA-488 / DSM 13995 / JCM 10881 / RKU-1) protein is Xylose isomerase.